Consider the following 140-residue polypeptide: Holo-[acyl-carrier-protein] synthase (140 aa).

Mg(2+) is bound by residues Asp8 and Glu62.

This sequence belongs to the P-Pant transferase superfamily. AcpS family. Mg(2+) is required as a cofactor.

It localises to the cytoplasm. The enzyme catalyses apo-[ACP] + CoA = holo-[ACP] + adenosine 3',5'-bisphosphate + H(+). Functionally, transfers the 4'-phosphopantetheine moiety from coenzyme A to a Ser of acyl-carrier-protein. This Cupriavidus taiwanensis (strain DSM 17343 / BCRC 17206 / CCUG 44338 / CIP 107171 / LMG 19424 / R1) (Ralstonia taiwanensis (strain LMG 19424)) protein is Holo-[acyl-carrier-protein] synthase.